Here is a 309-residue protein sequence, read N- to C-terminus: Probable lipid kinase YegS-like (309 aa).

Positions 1 to 134 constitute a DAGKc domain; the sequence is MAPSHWRLIL…VDLLRIDADH (134 aa). ATP contacts are provided by residues T39, 65–71, and T96; that span reads GDGTLSE. Mg(2+)-binding residues include L219, D222, and L224. E280 (proton acceptor) is an active-site residue.

Belongs to the diacylglycerol/lipid kinase family. YegS lipid kinase subfamily. It depends on Mg(2+) as a cofactor. Ca(2+) is required as a cofactor.

The protein localises to the cytoplasm. Functionally, probably phosphorylates lipids; the in vivo substrate is unknown. The protein is Probable lipid kinase YegS-like of Xanthomonas axonopodis pv. citri (strain 306).